A 163-amino-acid chain; its full sequence is MADSSFDVVSKVERQEVDNALHQAGKELSTRFDFRNTGASIEWSGEETITLTADTEERLLAALDVFKEKLIRRDISLKAFDAGEPAQSGKTYKLSGSLVQGITTENAKKITKKIRDEGPKGVKAQIQGDELRVSSKKRDDLQAVISLLKGEDFGIALQFVNYR.

Belongs to the YajQ family.

In terms of biological role, nucleotide-binding protein. The sequence is that of Nucleotide-binding protein ROP_16630 from Rhodococcus opacus (strain B4).